A 290-amino-acid chain; its full sequence is NAD kinase (290 aa).

D73 (proton acceptor) is an active-site residue. NAD(+)-binding positions include 73–74 (DG), 147–148 (ND), R158, R175, D177, 188–193 (TAYALS), and Q246.

Belongs to the NAD kinase family. A divalent metal cation is required as a cofactor.

The protein localises to the cytoplasm. The enzyme catalyses NAD(+) + ATP = ADP + NADP(+) + H(+). Involved in the regulation of the intracellular balance of NAD and NADP, and is a key enzyme in the biosynthesis of NADP. Catalyzes specifically the phosphorylation on 2'-hydroxyl of the adenosine moiety of NAD to yield NADP. The protein is NAD kinase of Thiobacillus denitrificans (strain ATCC 25259 / T1).